A 633-amino-acid chain; its full sequence is Biosynthetic arginine decarboxylase (633 aa).

N6-(pyridoxal phosphate)lysine is present on Lys-101. Position 284-294 (284-294 (VDVGGGLGVDY)) interacts with substrate.

It belongs to the Orn/Lys/Arg decarboxylase class-II family. SpeA subfamily. Mg(2+) is required as a cofactor. Pyridoxal 5'-phosphate serves as cofactor.

The enzyme catalyses L-arginine + H(+) = agmatine + CO2. It functions in the pathway amine and polyamine biosynthesis; agmatine biosynthesis; agmatine from L-arginine: step 1/1. Catalyzes the biosynthesis of agmatine from arginine. The sequence is that of Biosynthetic arginine decarboxylase from Aeromonas hydrophila subsp. hydrophila (strain ATCC 7966 / DSM 30187 / BCRC 13018 / CCUG 14551 / JCM 1027 / KCTC 2358 / NCIMB 9240 / NCTC 8049).